A 238-amino-acid chain; its full sequence is CD209 antigen-like protein A (238 aa).

Residues M1 to Q51 are Cytoplasmic-facing. The helical; Signal-anchor for type II membrane protein transmembrane segment at V52–L72 threads the bilayer. The Extracellular segment spans residues V73–K238. C108 and C119 form a disulfide bridge. In terms of domain architecture, C-type lectin spans F115–K229. N130 is a glycosylation site (N-linked (GlcNAc...) asparagine). 2 cysteine pairs are disulfide-bonded: C136–C228 and C207–C220. Ca(2+) is bound by residues E198, N200, L202, E205, N216, and D217. A glycan (N-linked (GlcNAc...) asparagine) is linked at N216.

In terms of tissue distribution, predominantly expressed in dendritic cells. Detected at very low levels in lung, spleen, lymph nodes and bone marrow.

It is found in the membrane. Functionally, probable pathogen-recognition receptor. May mediate the endocytosis of pathogens which are subsequently degraded in lysosomal compartments. May recognize in a calcium-dependent manner high mannose N-linked oligosaccharides in a variety of pathogen antigens. This is CD209 antigen-like protein A (Cd209a) from Mus musculus (Mouse).